A 115-amino-acid chain; its full sequence is MAEQVTSARATAKTVRIAARKVRLVVDLIRGKSVAEALAILKFTPRGASPVVEKVLLSAVANAENNFDLDREDLVVSEAFVNEGPTLKRFRPRAKGSASPINKRTSHITITVTEK.

It belongs to the universal ribosomal protein uL22 family. In terms of assembly, part of the 50S ribosomal subunit.

In terms of biological role, this protein binds specifically to 23S rRNA; its binding is stimulated by other ribosomal proteins, e.g. L4, L17, and L20. It is important during the early stages of 50S assembly. It makes multiple contacts with different domains of the 23S rRNA in the assembled 50S subunit and ribosome. Functionally, the globular domain of the protein is located near the polypeptide exit tunnel on the outside of the subunit, while an extended beta-hairpin is found that lines the wall of the exit tunnel in the center of the 70S ribosome. The sequence is that of Large ribosomal subunit protein uL22 from Lactiplantibacillus plantarum (strain ATCC BAA-793 / NCIMB 8826 / WCFS1) (Lactobacillus plantarum).